The primary structure comprises 180 residues: Large ribosomal subunit protein uL5 (180 aa).

Belongs to the universal ribosomal protein uL5 family. Part of the 50S ribosomal subunit; part of the 5S rRNA/L5/L18/L25 subcomplex. Contacts the 5S rRNA and the P site tRNA. Forms a bridge to the 30S subunit in the 70S ribosome.

Its function is as follows. This is one of the proteins that bind and probably mediate the attachment of the 5S RNA into the large ribosomal subunit, where it forms part of the central protuberance. In the 70S ribosome it contacts protein S13 of the 30S subunit (bridge B1b), connecting the 2 subunits; this bridge is implicated in subunit movement. Contacts the P site tRNA; the 5S rRNA and some of its associated proteins might help stabilize positioning of ribosome-bound tRNAs. This is Large ribosomal subunit protein uL5 from Xanthomonas axonopodis pv. citri (strain 306).